Reading from the N-terminus, the 226-residue chain is MDAGKAGQTLKTHCSAQRPDVCRWLSPFILSCCVYFCLWIPEDQLSWFAALVKCLPVLCLAGFLWVMSPSGGYTQLLQGALVCSAVGDACLIWPAAFVPGMAAFATAHLLYVWAFGFSPLQPGLLLLIILAPGPYLSLVLQHLEPDMVLPVAAYGLILMAMLWRGLAQGGSAGWGALLFTLSDGVLAWDTFAQPLPHAHLVIMTTYYAAQLLITLSALRSPVPKTD.

Over Met-1 to Arg-23 the chain is Cytoplasmic. Residues Trp-24–Ile-40 form a helical membrane-spanning segment. The Extracellular portion of the chain corresponds to Pro-41–Ser-46. Residues Trp-47–Met-67 traverse the membrane as a helical segment. Residues Ser-68–Gln-75 are Cytoplasmic-facing. A helical transmembrane segment spans residues Leu-76–Trp-93. At Pro-94–Gly-100 the chain is on the extracellular side. A helical transmembrane segment spans residues Met-101–Phe-117. The Cytoplasmic portion of the chain corresponds to Ser-118 to Gly-123. The chain crosses the membrane as a helical span at residues Leu-124–Leu-140. Residues Gln-141–Asp-146 lie on the Extracellular side of the membrane. The chain crosses the membrane as a helical span at residues Met-147–Trp-163. The Cytoplasmic segment spans residues Arg-164–Ser-171. A helical transmembrane segment spans residues Ala-172–Trp-188. Topologically, residues Asp-189–His-199 are extracellular. A helical transmembrane segment spans residues Leu-200–Leu-218. Residues Arg-219 to Asp-226 are Cytoplasmic-facing.

The protein belongs to the TMEM86 family. As to quaternary structure, homodimer.

The protein resides in the endoplasmic reticulum membrane. It localises to the cytoplasm. It carries out the reaction a 1-O-(1Z-alkenyl)-sn-glycero-3-phosphocholine + H2O = a 2,3-saturated aldehyde + sn-glycerol 3-phosphocholine. The catalysed reaction is a 1-O-(1Z-alkenyl)-sn-glycero-3-phosphoethanolamine + H2O = a 2,3-saturated aldehyde + sn-glycero-3-phosphoethanolamine. Competitively inhibited by lysophosphatidic acid. Functionally, catalyzes the hydrolysis of the vinyl ether bond of choline or ethanolamine lysoplasmalogens, forming fatty aldehyde and glycerophosphocholine or glycerophosphoethanolamine, respectively and is specific for the sn-2-deacylated (lyso) form of plasmalogen. In Homo sapiens (Human), this protein is Lysoplasmalogenase TMEM86B (TMEM86B).